Consider the following 1171-residue polypeptide: MSLRFVIGRAGSGKSTLCLREVQEELKQRPRGKTILYLVPEQMTFQTQQALIGSEDVRGSIRAQVFSFSRLAWKVLQEVGGASRLHIDEAGVHMLLRKIVESRKDGLSVFQKAAEQNGFFEHLGSMIAEFKRYNVTPSNVYEMWQQLDAHSSSAEQKLLANKVYDLQLLYDDFERALIGKYLDSEDYLQLLVEKLPQSEYVNGAEIYIDGFHSFSPQELEIVRQLMICGARVTITLTIDEKTLAQPVNELDLFYETTLTYEKIKQVAREEKIEIEKTIPLMEQPRFHSPALAHLEAHYEARPNEKFNGEASVTISTAANLRAEVEGVAREIRKLVADEKYRYRDIAVLLRNGESYYDVMRTLFTDYNIPHFIDEKRPMSHHPLVECIRSALEIISGNWRYDAVFRCVKTELLYPLDVRKEAMREEMDEFENYCLAYGVQGKRWTAEDPWMYRRYRSLDDTNGMITDSEREMEEKINRLRDVVRTPVIRMQKRLKRAGTVMQMCEAVYLFLEELDVPKKLEELRIRAEESGDFLFATDHEQVWEEVMSLLDTFVEMLGEEKMSLSMFTDVMSTGLEALQFANIPPSLDQVLIANIDHSRLSDVRATFIIGVNEGVIPVAPMDEGMLSDEEREVLGAAGIELAPTTRQTLLEEQFVMYQMVTRASEKLYISCPLADEEGKTLLASSFIKKIKRMFPNVKDSFISNDVNDLSRSEQISYVATPEVTLSYVMQHLLTWKRYGFEGNLDFWWDVYNFYVTSDEWKQKSSRVLSSLFYRNRAKKLSTAVSRDLYGDIIKGSVSRMELFNRCAYAHFAQHGLSLRERDIFKLDAPDIGELFHAALKKIADKLLRENRTWADLSIKECEHLSVLVIEEIAPLLQRQILLSSNRHFYLKQKLQQIIFRTSIILREHAKSSGFVPVDLEVPFGMGGTGSLPPMEFSLPNGVKMEVVGRIDRVDKAEDENGTFLRIIDYKSSSKALDLTEVYYGLALQMLTYLDVVTSNAQTWMKKGHAASPAGVLYFHIHNPIVEMKGDATEAEIEKEILKKFKMKGLVLGDADVVRLMDNKLSTGSSDIISAGLKKDGSFSARSSIASEQEFNVLQKYVHHTFENIGKDITEGVIDIAPYKMGNKAACTFCNFKSVCQFDESLEDNQFRSLKDMKDSEAMEKIREEVGGE.

Residues 1-390 (MSLRFVIGRA…HPLVECIRSA (390 aa)) enclose the UvrD-like helicase ATP-binding domain. ATP is bound at residue 8–15 (GRAGSGKS). A UvrD-like helicase C-terminal domain is found at 281 to 587 (MEQPRFHSPA…QFANIPPSLD (307 aa)). Cys-805, Cys-1129, Cys-1132, and Cys-1138 together coordinate [4Fe-4S] cluster.

The protein belongs to the helicase family. AddB/RexB type 1 subfamily. In terms of assembly, heterodimer of AddA and AddB. It depends on Mg(2+) as a cofactor. The cofactor is [4Fe-4S] cluster.

Functionally, the heterodimer acts as both an ATP-dependent DNA helicase and an ATP-dependent, dual-direction single-stranded exonuclease. Recognizes the chi site generating a DNA molecule suitable for the initiation of homologous recombination. The AddB subunit has 5' -&gt; 3' nuclease activity but not helicase activity. The polypeptide is ATP-dependent helicase/deoxyribonuclease subunit B (Bacillus cereus (strain ATCC 14579 / DSM 31 / CCUG 7414 / JCM 2152 / NBRC 15305 / NCIMB 9373 / NCTC 2599 / NRRL B-3711)).